Consider the following 700-residue polypeptide: MARTTPIERYRNIGISAHIDAGKTTTSERILFYTGVSHKLGEVHDGAATMDWMEQEQERGITITSAATTAFWSGMSKQYPQHRINVIDTPGHVDFTIEVERSMRVLDGAVMVYCAVGGVQPQSETVWRQANKYQVPRVAFVNKMDRTGANFLRVVEQIKTRLGGNSVPLQLPIGSEDNFKGVVDLVKMKAINWNEADQGMTFTYEEIPADMVDACEEWRQNLVESAAEASEELMEKYLGGEELTEEEIKAGLRQRVLAGEIIPVCCGSAFKNKGVQAMLDAVIDYLPAPTDIPAIKGINPDETEGERHASDDEPFSALAFKIATDPFVGNLTFFRVYSGVINSGDTVLNSVKDKRERFGRIVQMHANKREEIKEVRAGDIAAAIGLKDVGTGDTLCAQDAPIILERMEFPEPVISVAVEPKTKADQEKMGLALGRLAQEDPSFRVHTDEESGETIISGMGELHLDIIVDRMRREFKVEANIGKPQVSYRETIRTRVNDVEGKHAKQSGGRGQYGHVVIDLYPLDPEGPGYEFVNEIKGGVIPGEYIPAVDKGVQEQLKSGPLAGYPVVDLGVRLHFGSYHDVDSSELAFKLAASLAFKAAFNKANPVLLEPIMKVEVETPPDYVGDVIGDLSRRRAMVNGQEANEFVVKINAEVPLSEMFGYATDLRSQTQGRASYSMEPLKYAEAPKNVADAIIEARKK.

In terms of domain architecture, tr-type G spans 8–290 (ERYRNIGISA…AVIDYLPAPT (283 aa)). GTP is bound by residues 17–24 (AHIDAGKT), 88–92 (DTPGH), and 142–145 (NKMD).

Belongs to the TRAFAC class translation factor GTPase superfamily. Classic translation factor GTPase family. EF-G/EF-2 subfamily.

It is found in the cytoplasm. Its function is as follows. Catalyzes the GTP-dependent ribosomal translocation step during translation elongation. During this step, the ribosome changes from the pre-translocational (PRE) to the post-translocational (POST) state as the newly formed A-site-bound peptidyl-tRNA and P-site-bound deacylated tRNA move to the P and E sites, respectively. Catalyzes the coordinated movement of the two tRNA molecules, the mRNA and conformational changes in the ribosome. The sequence is that of Elongation factor G (fusA) from Pasteurella multocida (strain Pm70).